Here is a 352-residue protein sequence, read N- to C-terminus: Protein-glutamate methylesterase/protein-glutamine glutaminase 1 (352 aa).

Residues 5–122 enclose the Response regulatory domain; that stretch reads KVLVVDDSAF…SLDVLSVKEE (118 aa). D56 carries the post-translational modification 4-aspartylphosphate. The 198-residue stretch at 155 to 352 folds into the CheB-type methylesterase domain; the sequence is PDQDRKLNKL…EITEEVLSML (198 aa). Active-site residues include S170, H197, and D297.

It belongs to the CheB family. Phosphorylated by CheA. Phosphorylation of the N-terminal regulatory domain activates the methylesterase activity.

It localises to the cytoplasm. It catalyses the reaction [protein]-L-glutamate 5-O-methyl ester + H2O = L-glutamyl-[protein] + methanol + H(+). The catalysed reaction is L-glutaminyl-[protein] + H2O = L-glutamyl-[protein] + NH4(+). Its function is as follows. Involved in chemotaxis. Part of a chemotaxis signal transduction system that modulates chemotaxis in response to various stimuli. Catalyzes the demethylation of specific methylglutamate residues introduced into the chemoreceptors (methyl-accepting chemotaxis proteins or MCP) by CheR. Also mediates the irreversible deamidation of specific glutamine residues to glutamic acid. This chain is Protein-glutamate methylesterase/protein-glutamine glutaminase 1, found in Syntrophomonas wolfei subsp. wolfei (strain DSM 2245B / Goettingen).